A 250-amino-acid polypeptide reads, in one-letter code: Ubiquinone/menaquinone biosynthesis C-methyltransferase UbiE (250 aa).

S-adenosyl-L-methionine contacts are provided by residues Thr73, Asp94, and 122–123; that span reads DA.

This sequence belongs to the class I-like SAM-binding methyltransferase superfamily. MenG/UbiE family.

It carries out the reaction a 2-demethylmenaquinol + S-adenosyl-L-methionine = a menaquinol + S-adenosyl-L-homocysteine + H(+). The enzyme catalyses a 2-methoxy-6-(all-trans-polyprenyl)benzene-1,4-diol + S-adenosyl-L-methionine = a 5-methoxy-2-methyl-3-(all-trans-polyprenyl)benzene-1,4-diol + S-adenosyl-L-homocysteine + H(+). The protein operates within quinol/quinone metabolism; menaquinone biosynthesis; menaquinol from 1,4-dihydroxy-2-naphthoate: step 2/2. Its pathway is cofactor biosynthesis; ubiquinone biosynthesis. In terms of biological role, methyltransferase required for the conversion of demethylmenaquinol (DMKH2) to menaquinol (MKH2) and the conversion of 2-polyprenyl-6-methoxy-1,4-benzoquinol (DDMQH2) to 2-polyprenyl-3-methyl-6-methoxy-1,4-benzoquinol (DMQH2). This is Ubiquinone/menaquinone biosynthesis C-methyltransferase UbiE from Coxiella burnetii (strain CbuK_Q154) (Coxiella burnetii (strain Q154)).